The following is an 838-amino-acid chain: Shutoff protein (838 aa).

Residues 1–102 (MEDQHSAASE…EQEEDSPDRY (102 aa)) are disordered. Residues 18-35 (TLPPPPPPPPPPTSPPPS) show a composition bias toward pro residues. Positions 52 to 65 (TCSSSSSSSASSEC) are enriched in low complexity. The segment at 291–353 (LMQTLLVRRA…ACMVTVQLHC (63 aa)) is binding to host EIF4G. Positions 356 to 474 (TFLTSREMVR…SLWTGFDERT (119 aa)) constitute an RRM domain. Phosphotyrosine; by host is present on residues Tyr373 and Tyr690. Residues 693-838 (PHTGEELNTA…QELRRPQRGS (146 aa)) form a disordered region. Over residues 701–710 (TAAPSTAHHA) the composition is skewed to low complexity. Basic and acidic residues-rich tracts occupy residues 737–746 (SYADRVRSEL) and 770–787 (HSRDAARRRGSQQRDQRQ). The span at 813 to 829 (QALLHQQQQQQEHQPAQ) shows a compositional bias: low complexity.

The protein belongs to the adenoviridae shutoff protein family. As to quaternary structure, monomer. Interacts with hexon protein; this interaction allows chaperoning and trimerization of hexon proteins. Interacts (via N-terminus) with host initiation factor EIF4G (via C-terminus). Interacts (via RRM domain) with viral mRNAs that contain the tripartite leader; this interaction allows ribosome shunting and expression of viral late mRNAs. Post-translationally, might be cleaved by the viral protease. Phosphorylated. Tyrosine phosphorylation enhances preferential binding to tripartite leader mRNAs and allows ribosome shunting. In terms of processing, methylated. Asymmetric dimethylation by host PRMT1 of the Arg/Gly-rich region may regulate shutoff protein binding to hexon and promote the capsid assembly in the nucleus.

The protein resides in the host cytoplasm. In terms of biological role, protein that inhibits host translation while promoting late viral translation by ribosome shunting. Blocks host cap-dependent translation by binding to eIF4G, displacing MKNK1 from cap initiation complexes and preventing EIF4E phosphorylation. Binds to the tripartite leader sequence of viral late mRNAs and recruits host eIF4G, PABPC1/poly-A binding protein and 40S ribosomes subunits on viral mRNAs, allowing ribosome shunting and efficient translation of late viral mRNAs even though conventional translation via ribosome scanning from the cap has been shut off in the host cell. During assembly, acts as a chaperone protein that helps hexon proteins assembly into trimers. The protein is Shutoff protein of Porcine adenovirus A serotype 3 (PAdV-3).